The chain runs to 644 residues: N-acetylgalactosaminyltransferase 4 (644 aa).

Topologically, residues 1–13 are cytoplasmic; it reads MAIKKRYVKRLLR. The chain crosses the membrane as a helical; Signal-anchor for type II membrane protein span at residues 14 to 34; that stretch reads KVVLLLVVIVTVSLVTTLVVE. Residues 35-644 are Lumenal-facing; sequence RRMKNAAELT…MLDTFYDGLK (610 aa). N-linked (GlcNAc...) asparagine glycosylation is found at Asn-157 and Asn-179. A catalytic subdomain A region spans residues 177–288; the sequence is LPNISVIFIF…YNWLPPLIEP (112 aa). 2 residues coordinate substrate: Asp-218 and Arg-249. Asp-272 is a binding site for Mn(2+). Ser-273 is a substrate binding site. His-274 contributes to the Mn(2+) binding site. Residues 345–407 are catalytic subdomain B; it reads PYRSPVMMGG…PCSRVAHIFR (63 aa). Residue Trp-376 participates in substrate binding. His-404 provides a ligand contact to Mn(2+). Residue Arg-407 coordinates substrate. The Ricin B-type lectin domain maps to 496-629; it reads AAGIIQNVAN…GNDRQRWEFG (134 aa). A disulfide bond links Cys-509 and Cys-526. Residues Asn-529 and Asn-565 are each glycosylated (N-linked (GlcNAc...) asparagine). 2 disulfide bridges follow: Cys-556-Cys-573 and Cys-600-Cys-617. Asn-632 carries an N-linked (GlcNAc...) asparagine glycan.

This sequence belongs to the glycosyltransferase 2 family. GalNAc-T subfamily. It depends on Mn(2+) as a cofactor. Expressed in developing oocytes and egg chambers. During embryonic stages 9-11, expressed in the primordium of the foregut, midgut and hindgut. During embryonic stages 12-13, shows specific expression in the proventriculus that continues until the end of embryogenesis. In third instar larvae, ubiquitously expressed in wing, eye-antennal, leg and haltere imaginal disks.

It localises to the golgi apparatus membrane. The catalysed reaction is L-seryl-[protein] + UDP-N-acetyl-alpha-D-galactosamine = a 3-O-[N-acetyl-alpha-D-galactosaminyl]-L-seryl-[protein] + UDP + H(+). It catalyses the reaction L-threonyl-[protein] + UDP-N-acetyl-alpha-D-galactosamine = a 3-O-[N-acetyl-alpha-D-galactosaminyl]-L-threonyl-[protein] + UDP + H(+). The protein operates within protein modification; protein glycosylation. Its function is as follows. Glycopeptide transferase involved in O-linked oligosaccharide biosynthesis, which catalyzes the transfer of an N-acetyl-D-galactosamine residue to an already glycosylated peptide. In contrast to other proteins of the family, it does not act as a peptide transferase that transfers GalNAc onto serine or threonine residue on the protein receptor, but instead requires the prior addition of a GalNAc on a peptide before adding additional GalNAc moieties. Some peptide transferase activity is however not excluded, considering that its appropriate peptide substrate may remain unidentified. Prefers the diglycosylated Muc5AC-3/13 as substrate. This is N-acetylgalactosaminyltransferase 4 from Drosophila melanogaster (Fruit fly).